The primary structure comprises 496 residues: uncharacterized protein (496 aa).

The next 13 helical transmembrane spans lie at 5–25, 45–65, 77–97, 127–147, 161–181, 193–213, 239–259, 278–298, 325–345, 374–394, 396–416, 424–444, and 450–470; these read LTALLITAIIVLTVVCIGFLA, FGGLLVWFLVGADLYTAYTFL, VAFFAIPYSVLAYFIAYFFLP, LVAIVGVLMLIPYICLQLSGI, VKFVVIISFILVALYTFFSGI, ILVWVIMLFMVVSLPLIHFNG, IPWFITASIVSALALFMWAHA, FLPLYNIVLILVIFLGFIAFL, FAYATIALASLIPCSIMAIGA, MVFVVIGLALLFGMLFPTALV, LQLLGVSGMVQIFPAIAVSLF, ATVIGLLAGLAVTFIVYITQS, and EGFWGLAANMIAVVILNPLFV.

The protein belongs to the sodium:solute symporter (SSF) (TC 2.A.21) family.

The protein resides in the cell membrane. This is an uncharacterized protein from Bacillus subtilis (strain 168).